The chain runs to 461 residues: Bifunctional enzyme LpxC/FabZ (461 aa).

Residues 1–302 (MLKQKTLKDS…FARQMRKEIR (302 aa)) form a UDP-3-O-acyl-N-acetylglucosamine deacetylase region. The Zn(2+) site is built by His-78, His-260, and Asp-264. His-287 functions as the Proton donor in the catalytic mechanism. The segment at 303 to 461 (LHEIQAPTYD…EFMAQIVKNK (159 aa)) is 3-hydroxyacyl-[acyl-carrier-protein] dehydratase. His-364 is a catalytic residue.

This sequence in the N-terminal section; belongs to the LpxC family. It in the C-terminal section; belongs to the thioester dehydratase family. It depends on Zn(2+) as a cofactor.

It is found in the cytoplasm. It catalyses the reaction a UDP-3-O-[(3R)-3-hydroxyacyl]-N-acetyl-alpha-D-glucosamine + H2O = a UDP-3-O-[(3R)-3-hydroxyacyl]-alpha-D-glucosamine + acetate. The catalysed reaction is a (3R)-hydroxyacyl-[ACP] = a (2E)-enoyl-[ACP] + H2O. The protein operates within glycolipid biosynthesis; lipid IV(A) biosynthesis; lipid IV(A) from (3R)-3-hydroxytetradecanoyl-[acyl-carrier-protein] and UDP-N-acetyl-alpha-D-glucosamine: step 2/6. Functionally, catalyzes the hydrolysis of UDP-3-O-myristoyl-N-acetylglucosamine to form UDP-3-O-myristoylglucosamine and acetate, the committed step in lipid A biosynthesis. Involved in unsaturated fatty acids biosynthesis. Catalyzes the dehydration of short chain beta-hydroxyacyl-ACPs and long chain saturated and unsaturated beta-hydroxyacyl-ACPs. The chain is Bifunctional enzyme LpxC/FabZ (lpxC/fabZ) from Bacteroides thetaiotaomicron (strain ATCC 29148 / DSM 2079 / JCM 5827 / CCUG 10774 / NCTC 10582 / VPI-5482 / E50).